The following is a 1274-amino-acid chain: VWFA and cache domain-containing protein 1 (1274 aa).

The N-terminal stretch at 1 to 35 is a signal peptide; sequence MARQPEEEETAVARARRPPLWLLCLVACWLLGAGA. Residues 36–1095 are Extracellular-facing; sequence EADFSILDEA…ITLNMIKSAP (1060 aa). Asn-145 carries an N-linked (GlcNAc...) asparagine glycan. The 216-residue stretch at 228–443 folds into the VWFA domain; the sequence is HIVVILDHGA…TTVGRFYTNL (216 aa). Cache domains are found at residues 453–532 and 772–853; these read FSLP…SEPP and LTGP…HPTL. The helical transmembrane segment at 1096-1116 threads the bilayer; that stretch reads VGPVAGGIMGCIMVLVLAVYA. Residues 1117-1274 are Cytoplasmic-facing; sequence YRHQIHRRSH…VTVHTVDAEC (158 aa). A disordered region spans residues 1179–1227; it reads PERRRRYWGRSGTESDHGYSTMSPQEDSENPPCNNDPLSAGVDVGNHDE. Residues 1196 to 1215 show a composition bias toward polar residues; the sequence is GYSTMSPQEDSENPPCNNDP.

Belongs to the calcium channel subunit alpha-2/delta family.

Its subcellular location is the membrane. Functionally, may regulate voltage-dependent calcium channels. The chain is VWFA and cache domain-containing protein 1 (CACHD1) from Homo sapiens (Human).